We begin with the raw amino-acid sequence, 790 residues long: Lon protease 2 (790 aa).

One can recognise a Lon N-terminal domain in the interval Leu18–Leu210. Gly362 to Thr369 is an ATP binding site. The 182-residue stretch at Ser598–Pro779 folds into the Lon proteolytic domain. Active-site residues include Ser685 and Lys728.

The protein belongs to the peptidase S16 family. As to quaternary structure, homohexamer. Organized in a ring with a central cavity.

The protein resides in the cytoplasm. The enzyme catalyses Hydrolysis of proteins in presence of ATP.. Functionally, ATP-dependent serine protease that mediates the selective degradation of mutant and abnormal proteins as well as certain short-lived regulatory proteins. Required for cellular homeostasis and for survival from DNA damage and developmental changes induced by stress. Degrades polypeptides processively to yield small peptide fragments that are 5 to 10 amino acids long. Binds to DNA in a double-stranded, site-specific manner. The sequence is that of Lon protease 2 from Syntrophobacter fumaroxidans (strain DSM 10017 / MPOB).